The sequence spans 482 residues: UDP-glucose 6-dehydrogenase 2 (482 aa).

NAD(+) contacts are provided by residues 8 to 13, Asp-33, Arg-38, 86 to 90, 127 to 128, and Glu-163; these read GAGYVG, VNTPT, and ST. Substrate-binding positions include 159 to 163, 218 to 225, and 258 to 271; these read EFLAE, KLAANAFL, and RIGPRFLSASVGFG. Cys-274 acts as the Nucleophile in catalysis. An NAD(+)-binding site is contributed by 274–277; that stretch reads CFQK. 336 to 337 lines the substrate pocket; that stretch reads FK. Residue Arg-344 coordinates NAD(+). The residue at position 395 (Ser-395) is a Phosphoserine. Arg-449 is a binding site for substrate.

The protein belongs to the UDP-glucose/GDP-mannose dehydrogenase family.

The catalysed reaction is UDP-alpha-D-glucose + 2 NAD(+) + H2O = UDP-alpha-D-glucuronate + 2 NADH + 3 H(+). Its pathway is nucleotide-sugar biosynthesis; UDP-alpha-D-glucuronate biosynthesis; UDP-alpha-D-glucuronate from UDP-alpha-D-glucose: step 1/1. In terms of biological role, involved in the biosynthesis of UDP-glucuronic acid (UDP-GlcA), providing nucleotide sugars for cell-wall polymers. The chain is UDP-glucose 6-dehydrogenase 2 (UGD2) from Oryza sativa subsp. japonica (Rice).